Consider the following 534-residue polypeptide: Prolyl 4-hydroxylase subunit alpha-1 (534 aa).

Residues 1–17 (MIWGVLMMGILLPQCSA) form the signal peptide. Asn-113 carries N-linked (GlcNAc...) asparagine glycosylation. The TPR repeat unit spans residues 205 to 238 (VSVLDYLSYAVYQQGDLDKALLLTKKLLELDPEH). Asn-259 carries N-linked (GlcNAc...) asparagine glycosylation. Residues 411–519 (TAEELQVANY…KWVSNKWLHE (109 aa)) enclose the Fe2OG dioxygenase domain. Residues His-429, Asp-431, and His-500 each coordinate Fe cation. Lys-510 is a 2-oxoglutarate binding site.

It belongs to the P4HA family. In terms of assembly, heterotetramer of two alpha-1 chains and two beta chains (P4HB)(the beta chain is the multi-functional PDI), where P4HB plays the role of a structural subunit; this tetramer catalyzes the formation of 4-hydroxyproline in collagen. Fe(2+) serves as cofactor. Requires L-ascorbate as cofactor.

The protein resides in the endoplasmic reticulum lumen. The catalysed reaction is L-prolyl-[collagen] + 2-oxoglutarate + O2 = trans-4-hydroxy-L-prolyl-[collagen] + succinate + CO2. Its function is as follows. Catalyzes the post-translational formation of 4-hydroxyproline in -Xaa-Pro-Gly- sequences in collagens and other proteins. The protein is Prolyl 4-hydroxylase subunit alpha-1 (P4ha1) of Rattus norvegicus (Rat).